We begin with the raw amino-acid sequence, 275 residues long: Pyridoxal phosphate homeostasis protein (275 aa).

Ser6 carries the post-translational modification Phosphoserine. Lys47 carries the post-translational modification N6-(pyridoxal phosphate)lysine. Tyr69 bears the Phosphotyrosine mark. Position 125 is an N6-succinyllysine (Lys125). Phosphoserine occurs at positions 226 and 244. Over residues 251 to 263 the composition is skewed to basic and acidic residues; it reads DYSKKPTPDKCAA. The disordered stretch occupies residues 251–275; that stretch reads DYSKKPTPDKCAADVKAPLEVAQEH.

Belongs to the pyridoxal phosphate-binding protein YggS/PROSC family. Ubiquitous.

Functionally, pyridoxal 5'-phosphate (PLP)-binding protein, which may be involved in intracellular homeostatic regulation of pyridoxal 5'-phosphate (PLP), the active form of vitamin B6. The protein is Pyridoxal phosphate homeostasis protein of Homo sapiens (Human).